Reading from the N-terminus, the 967-residue chain is Phosphoenolpyruvate carboxylase 1 (967 aa).

S11 bears the Phosphoserine mark. Catalysis depends on residues H173 and K602. Phosphoserine is present on S704.

It belongs to the PEPCase type 1 family. In terms of assembly, homotetramer. It depends on Mg(2+) as a cofactor. Mn(2+) serves as cofactor. Post-translationally, the phosphorylation of Ser-11 is reversibly promoted by inorganic phosphate (Pi) deprivation. Enhanced activity by phosphorylation at pH 7.3 by lowering Km and sensitivity to inhibition by L-malate and L-aspartate, while enhancing activation by glucose 6-phosphate. Expressed in all plant organs, with higher levels in roots.

It localises to the cytoplasm. It catalyses the reaction oxaloacetate + phosphate = phosphoenolpyruvate + hydrogencarbonate. Its activity is regulated as follows. By light-reversible phosphorylation. Activated by inorganic phosphate (Pi) deprivation and glucose 6-phosphate. Inhibited by L-malate and L-aspartate. Through the carboxylation of phosphoenolpyruvate (PEP) it forms oxaloacetate, a four-carbon dicarboxylic acid source for the tricarboxylic acid cycle. Contributes probably to the adaptation to inorganic phosphate (Pi) deprivation. The protein is Phosphoenolpyruvate carboxylase 1 (PPC1) of Arabidopsis thaliana (Mouse-ear cress).